The chain runs to 408 residues: MKKAIILAIGNELVEGLIVDTNSKYLAQRLKEFGYYIVRTETLPDNFDIMVLRIKEAIKDADLIITSGGLGPTEDDLTREAVAHSIGRKLLKNEAIAQELINRAIKYYGKAPESVVKQAFVIENAEVIDNKVGTAPGQMLKYDGKIIILLPGPPVELIPMFESILEKLKTNDSLYTRRIKTIGIPEAVLMDEYKDILYSNSRITIATMASYERGVEVRFTGPIEIKDEIDYVVNTLLPKLGESVYALDDKEMHDVVYELLVKNNYTVSFAESCTGGLISSTFVDIPGVSSVFKGSVVAYSNEAKIEILGVSKETIEKFGAVSEECVIEMAQGAKKIFNSNFSVAVSGIAGPSGGSEKKPVGTVCIAVCSPNGINSATYNLRGDRQMIRKRSTLIAFDMLRRGIIKCQG.

It belongs to the CinA family.

In Fervidobacterium nodosum (strain ATCC 35602 / DSM 5306 / Rt17-B1), this protein is CinA-like protein.